We begin with the raw amino-acid sequence, 180 residues long: Large ribosomal subunit protein uL6 (180 aa).

Belongs to the universal ribosomal protein uL6 family. As to quaternary structure, part of the 50S ribosomal subunit.

Its function is as follows. This protein binds to the 23S rRNA, and is important in its secondary structure. It is located near the subunit interface in the base of the L7/L12 stalk, and near the tRNA binding site of the peptidyltransferase center. This is Large ribosomal subunit protein uL6 from Dictyoglomus turgidum (strain DSM 6724 / Z-1310).